The following is a 211-amino-acid chain: Thymidylate kinase (211 aa).

Position 11–18 (11–18 (GPDGAGKT)) interacts with ATP.

Belongs to the thymidylate kinase family.

It catalyses the reaction dTMP + ATP = dTDP + ADP. Functionally, phosphorylation of dTMP to form dTDP in both de novo and salvage pathways of dTTP synthesis. The polypeptide is Thymidylate kinase (Streptococcus pyogenes serotype M3 (strain ATCC BAA-595 / MGAS315)).